A 698-amino-acid polypeptide reads, in one-letter code: Polyribonucleotide nucleotidyltransferase (698 aa).

Residues Asp485 and Asp491 each coordinate Mg(2+). The KH domain maps to 552-612; sequence PRVEMMTIPE…SDLKGAKSIV (61 aa). Positions 622–690 constitute an S1 motif domain; sequence GMVYDGTVKK…KLGRLNLSYV (69 aa).

This sequence belongs to the polyribonucleotide nucleotidyltransferase family. Requires Mg(2+) as cofactor.

The protein localises to the cytoplasm. It catalyses the reaction RNA(n+1) + phosphate = RNA(n) + a ribonucleoside 5'-diphosphate. Involved in mRNA degradation. Catalyzes the phosphorolysis of single-stranded polyribonucleotides processively in the 3'- to 5'-direction. In Treponema denticola (strain ATCC 35405 / DSM 14222 / CIP 103919 / JCM 8153 / KCTC 15104), this protein is Polyribonucleotide nucleotidyltransferase.